Consider the following 364-residue polypeptide: Tubulin alpha-2 chain (364 aa).

GTP contacts are provided by glycine 59, threonine 60, threonine 94, asparagine 121, and asparagine 144. Glutamate 170 is a catalytic residue.

It belongs to the tubulin family. In terms of assembly, dimer of alpha and beta chains. A typical microtubule is a hollow water-filled tube with an outer diameter of 25 nm and an inner diameter of 15 nM. Alpha-beta heterodimers associate head-to-tail to form protofilaments running lengthwise along the microtubule wall with the beta-tubulin subunit facing the microtubule plus end conferring a structural polarity. Microtubules usually have 13 protofilaments but different protofilament numbers can be found in some organisms and specialized cells. Mg(2+) serves as cofactor. Undergoes a tyrosination/detyrosination cycle, the cyclic removal and re-addition of a C-terminal tyrosine residue by the enzymes tubulin tyrosine carboxypeptidase (TTCP) and tubulin tyrosine ligase (TTL), respectively.

The protein localises to the cytoplasm. The protein resides in the cytoskeleton. It catalyses the reaction GTP + H2O = GDP + phosphate + H(+). Its function is as follows. Tubulin is the major constituent of microtubules, a cylinder consisting of laterally associated linear protofilaments composed of alpha- and beta-tubulin heterodimers. Microtubules grow by the addition of GTP-tubulin dimers to the microtubule end, where a stabilizing cap forms. Below the cap, tubulin dimers are in GDP-bound state, owing to GTPase activity of alpha-tubulin. The protein is Tubulin alpha-2 chain (TUBA2) of Anemia phyllitidis (Fern).